The sequence spans 1047 residues: Ubiquitin carboxyl-terminal hydrolase 48 (1047 aa).

Residues 89-416 (VGLTNLGATC…NAYMLVYKQQ (328 aa)) enclose the USP domain. Cysteine 98 (nucleophile) is an active-site residue. Histidine 348 serves as the catalytic Proton acceptor. 3 DUSP domains span residues 457 to 551 (QSVD…RSSL), 567 to 697 (NQLN…DHDP), and 717 to 830 (MMAN…RIHD). The segment at 609-647 (LEEDEEETKHNNSKINGEKSSPGTKADGVKGDSEDGDGE) is disordered. Over residues 621-631 (SKINGEKSSPG) the composition is skewed to polar residues. The span at 635–647 (DGVKGDSEDGDGE) shows a compositional bias: basic and acidic residues. The disordered stretch occupies residues 887 to 928 (PEFSVSGSDVEDEKEEPKLDGEKDPDFSQTEGGAKRQKLNDT). Over residues 901–912 (EEPKLDGEKDPD) the composition is skewed to basic and acidic residues. Residues 961-1012 (VSANQTLKDLKIQIMHAFSVAPFDQNLSIDGRCLKDDSATLGSLGVIPESII) enclose the Ubiquitin-like domain.

Belongs to the peptidase C19 family.

Its subcellular location is the cytoplasm. The protein resides in the nucleus. The enzyme catalyses Thiol-dependent hydrolysis of ester, thioester, amide, peptide and isopeptide bonds formed by the C-terminal Gly of ubiquitin (a 76-residue protein attached to proteins as an intracellular targeting signal).. Its function is as follows. Recognizes and hydrolyzes the peptide bond at the C-terminal Gly of ubiquitin. Involved in the processing of poly-ubiquitin precursors as well as that of ubiquitinated proteins. The sequence is that of Ubiquitin carboxyl-terminal hydrolase 48 (usp48) from Danio rerio (Zebrafish).